The chain runs to 145 residues: Large ribosomal subunit protein uL16 (145 aa).

Belongs to the universal ribosomal protein uL16 family. Part of the 50S ribosomal subunit.

Its function is as follows. Binds 23S rRNA and is also seen to make contacts with the A and possibly P site tRNAs. This chain is Large ribosomal subunit protein uL16, found in Shouchella clausii (strain KSM-K16) (Alkalihalobacillus clausii).